Here is a 282-residue protein sequence, read N- to C-terminus: Putative phosphite transport system permease protein HtxC (282 aa).

The next 4 membrane-spanning stretches (helical) occupy residues 23–43, 81–101, 130–150, and 239–259; these read HFAT…VCQI, LAMA…LALM, VYAL…VLAI, and FNKM…IDFI. The ABC transmembrane type-1 domain maps to 77–260; sequence AGETLAMATI…LMVSAIDFIS (184 aa).

It belongs to the binding-protein-dependent transport system permease family.

It localises to the cell inner membrane. Functionally, probably forms part of a binding-protein-dependent hypophosphite transporter. This is Putative phosphite transport system permease protein HtxC (htxC) from Stutzerimonas stutzeri (Pseudomonas stutzeri).